Here is a 514-residue protein sequence, read N- to C-terminus: Peptide chain release factor 3 (514 aa).

One can recognise a tr-type G domain in the interval 8 to 268 (KKRRTFAIIS…IFLKFAPEPH (261 aa)). GTP contacts are provided by residues 17-24 (SHPDAGKT), 85-89 (DTPGH), and 139-142 (NKLD).

It belongs to the TRAFAC class translation factor GTPase superfamily. Classic translation factor GTPase family. PrfC subfamily.

It localises to the cytoplasm. In terms of biological role, increases the formation of ribosomal termination complexes and stimulates activities of RF-1 and RF-2. It binds guanine nucleotides and has strong preference for UGA stop codons. It may interact directly with the ribosome. The stimulation of RF-1 and RF-2 is significantly reduced by GTP and GDP, but not by GMP. In Streptococcus pneumoniae serotype 2 (strain D39 / NCTC 7466), this protein is Peptide chain release factor 3.